The primary structure comprises 874 residues: Translation initiation factor IF-2 (874 aa).

The disordered stretch occupies residues 1 to 289 (MKIKNAQLTK…KHYDEHSVQR (289 aa)). The span at 31 to 48 (SSSEKPTTKVPEKVAKEK) shows a compositional bias: basic and acidic residues. Residues 81-104 (RSSFASEDSTIPSPVSVDTESTAF) are compositionally biased toward polar residues. Positions 105–118 (SPPVVEEVVSPLES) are enriched in low complexity. Composition is skewed to basic and acidic residues over residues 144-158 (PPKK…KEPP) and 186-198 (PKKE…KERT). The segment covering 199–211 (GTVQTKPQQSSEV) has biased composition (polar residues). Over residues 228–260 (YRRDTSKRPGSDFRDRSKKDDSPKAFTGRDRYG) the composition is skewed to basic and acidic residues. Positions 271–280 (RKKRVQKTKK) are enriched in basic residues. The 170-residue stretch at 380–549 (IRPPIVAFMG…ALQAEVLELK (170 aa)) folds into the tr-type G domain. A G1 region spans residues 389 to 396 (GHVDHGKT). 389 to 396 (GHVDHGKT) is a GTP binding site. The segment at 414 to 418 (AITQH) is G2. Positions 435-438 (DTPG) are G3. GTP contacts are provided by residues 435-439 (DTPGH) and 489-492 (NKCD). Positions 489-492 (NKCD) are G4. Residues 525 to 527 (SAK) are G5.

Belongs to the TRAFAC class translation factor GTPase superfamily. Classic translation factor GTPase family. IF-2 subfamily.

The protein resides in the cytoplasm. Functionally, one of the essential components for the initiation of protein synthesis. Protects formylmethionyl-tRNA from spontaneous hydrolysis and promotes its binding to the 30S ribosomal subunits. Also involved in the hydrolysis of GTP during the formation of the 70S ribosomal complex. The polypeptide is Translation initiation factor IF-2 (Chlamydia abortus (strain DSM 27085 / S26/3) (Chlamydophila abortus)).